Here is a 425-residue protein sequence, read N- to C-terminus: MLDQRLVRENPDAIATELGRRGKAVDLTRLQVIAQQQRKLEEERSGLQAEGNRIGKEVGQKIKGGADPKGEEVAELRQQGNAIKQKVAVLEEEEKHLFTQLKEQLLTYPNLPSPDCPEGKDETDNVELRRWGSPRQEEGLEEHWQIAERLHLFDTERSVRIAQSRFVTLMGQGARLERALINFMLDLHTSKGYREVMPPVLVNSASLTGSGQLPKFADDCFRCSEDDLWLTPTAEVPVTSLHRDEIIPADQLPLRYAAYSPCFRREAGSYGRDTRGLIRLHQFNKVELYWFAHPDHSAEAHAQITADAEAVLQALELPYRVLDLCTADIGFSAQRTYDLEVWLPGAEAYREISSCSVCGDFQARRSAIRTKEGKSTKLVHTLNGSGLAVGRTMAAVLETGQQSDGSVLLPKALVPYVGDERLQPE.

Residue 233–235 (TAE) participates in L-serine binding. 264–266 (RRE) contacts ATP. Residue glutamate 287 coordinates L-serine. An ATP-binding site is contributed by 351–354 (EISS). L-serine is bound at residue serine 385.

Belongs to the class-II aminoacyl-tRNA synthetase family. Type-1 seryl-tRNA synthetase subfamily. In terms of assembly, homodimer. The tRNA molecule binds across the dimer.

It is found in the cytoplasm. It carries out the reaction tRNA(Ser) + L-serine + ATP = L-seryl-tRNA(Ser) + AMP + diphosphate + H(+). It catalyses the reaction tRNA(Sec) + L-serine + ATP = L-seryl-tRNA(Sec) + AMP + diphosphate + H(+). Its pathway is aminoacyl-tRNA biosynthesis; selenocysteinyl-tRNA(Sec) biosynthesis; L-seryl-tRNA(Sec) from L-serine and tRNA(Sec): step 1/1. Catalyzes the attachment of serine to tRNA(Ser). Is also able to aminoacylate tRNA(Sec) with serine, to form the misacylated tRNA L-seryl-tRNA(Sec), which will be further converted into selenocysteinyl-tRNA(Sec). In Parasynechococcus marenigrum (strain WH8102), this protein is Serine--tRNA ligase.